The following is a 228-amino-acid chain: Thymidylate kinase (228 aa).

Positions 1-10 (MSDSAVQRSS) are enriched in polar residues. A disordered region spans residues 1–23 (MSDSAVQRSSGRGRFITFEGGEG). 20–27 (GGEGTGKS) serves as a coordination point for ATP.

Belongs to the thymidylate kinase family.

It catalyses the reaction dTMP + ATP = dTDP + ADP. Functionally, phosphorylation of dTMP to form dTDP in both de novo and salvage pathways of dTTP synthesis. This chain is Thymidylate kinase, found in Bradyrhizobium diazoefficiens (strain JCM 10833 / BCRC 13528 / IAM 13628 / NBRC 14792 / USDA 110).